The primary structure comprises 263 residues: Triosephosphate isomerase (263 aa).

10-12 (NWK) provides a ligand contact to substrate. The Electrophile role is filled by histidine 104. Glutamate 176 acts as the Proton acceptor in catalysis. Substrate is bound by residues glycine 182, serine 221, and 242–243 (GG).

The protein belongs to the triosephosphate isomerase family. In terms of assembly, homodimer.

It is found in the cytoplasm. The enzyme catalyses D-glyceraldehyde 3-phosphate = dihydroxyacetone phosphate. Its pathway is carbohydrate biosynthesis; gluconeogenesis. It functions in the pathway carbohydrate degradation; glycolysis; D-glyceraldehyde 3-phosphate from glycerone phosphate: step 1/1. Functionally, involved in the gluconeogenesis. Catalyzes stereospecifically the conversion of dihydroxyacetone phosphate (DHAP) to D-glyceraldehyde-3-phosphate (G3P). The protein is Triosephosphate isomerase of Haemophilus influenzae (strain PittEE).